A 177-amino-acid polypeptide reads, in one-letter code: Large ribosomal subunit protein uL6 (177 aa).

It belongs to the universal ribosomal protein uL6 family. As to quaternary structure, part of the 50S ribosomal subunit.

Functionally, this protein binds to the 23S rRNA, and is important in its secondary structure. It is located near the subunit interface in the base of the L7/L12 stalk, and near the tRNA binding site of the peptidyltransferase center. The chain is Large ribosomal subunit protein uL6 from Methylococcus capsulatus (strain ATCC 33009 / NCIMB 11132 / Bath).